The primary structure comprises 1551 residues: Transient receptor potential cation channel subfamily M member-like 2 (1551 aa).

The Cytoplasmic segment spans residues 1 to 714 (MGKDSFTPLY…WMGTMAMNTR (714 aa)). The stretch at 715-730 (WWKVLVCLYLPVLIFP) is an intramembrane region. Topologically, residues 731–837 (IIYFVPDEQH…DRIMHFYSAP (107 aa)) are cytoplasmic. Residues 744–767 (AAEREHQKSLNQKSSKVKSHKEKN) are disordered. The helical transmembrane segment at 838–858 (FSKFVGNVVGYLAFIFLYAYV) threads the bilayer. Residues 859–877 (VLFNFPRFDPAKTLGGIHP) are Extracellular-facing. A helical membrane pass occupies residues 878-898 (TEIVLYFWVFTILIEEIRQLA). Ca(2+) is bound by residues E893 and Q896. Residues 899-916 (AKPPKYIKDKVSVYFSDT) lie on the Cytoplasmic side of the membrane. Residues 917-937 (WNFVDIFSLTVFIIAIILRFF) traverse the membrane as a helical segment. Ca(2+)-binding residues include N918 and D921. Topologically, residues 938–947 (TNSRIFTASR) are extracellular. Residues 948-968 (IILSLDIIFFIVRSLQIFSVN) traverse the membrane as a helical segment. Residues 969–980 (RLLGPKLVMIQK) lie on the Cytoplasmic side of the membrane. The helical transmembrane segment at 981–1001 (MMQDLAQFIIILAVFTIAYGI) threads the bilayer. Residues 1002-1018 (ALHAVMFPSPGIYARNN) lie on the Extracellular side of the membrane. N1017 carries an N-linked (GlcNAc...) asparagine glycan. The pore-forming intramembrane region spans 1019-1034 (TWVTITSVVQYPYWQM). A Selectivity filter motif is present at residues 1035–1037 (YGE). Over 1035–1059 (YGELFLDEIQGEKPKEFGEVDPDGR) the chain is Extracellular. A Prevents fast channel inactivation motif is present at residues 1040–1042 (LDE). The helical transmembrane segment at 1060–1080 (WLSPLLLAIYMVFTNILLLNL) threads the bilayer. Over 1081 to 1116 (LIAIFNYTFERVQEDSDKVWKFQRYDLVQEYHSRPV) the chain is Cytoplasmic. Residues 1117–1135 (FAPPLVLLGHILIFIRWVW) lie within the membrane without spanning it. The Cytoplasmic portion of the chain corresponds to 1136-1551 (RMCRCGHPPR…KVAKMRDAAF (416 aa)). Residues 1184-1209 (LEERVRALGDRVDCINSQLNRVLDSM) are a coiled coil. The 153-residue stretch at 1394–1546 (WKRTSAGVML…VSILEKVAKM (153 aa)) folds into the Nudix hydrolase domain. The short motif at 1428-1449 (GMVEPGQLVTQALKAEFGEEAM) is the Nudix box element.

This sequence belongs to the transient receptor (TC 1.A.4) family. LTrpC subfamily. TRPM2 sub-subfamily. As to quaternary structure, homotetramer.

The protein localises to the cell membrane. Its activity is regulated as follows. Activated by phosphatidylinositol 4,5-bisphosphate (PIP2). Although PIP2 is essential for the channel activation, its contribution to the level of channel activity is minimal. Also activated by diphosphate ribose-2'-phosphate. Upon binding to ADPR, channel activation requires only a short initial cytosolic Ca(2+) increase, then the activation is sustained by the uptake of extracellular Ca(2+). Activated by 2-aminoethyl diphenylborinate (2-APB) in a Ca(2+)-dependent manner. 2-APB prevents the inactivation of the channel. In terms of biological role, nonselective, voltage-independent cation channel that mediates Ca(2+) and to a lesser extent Na(+) influx, leading to increased cytoplasmic Ca(2+) levels. Functions as a ligand-gated ion channel. Binding of ADP-ribose causes a conformation change; the channel is primed but still requires Ca(2+) binding to trigger channel opening. May have ADP-ribose pyrophosphatase activity which reduces ADP-ribose levels induced by oxidative stress, thus preventing the channel activation by reactive oxygen species. This chain is Transient receptor potential cation channel subfamily M member-like 2, found in Nematostella vectensis (Starlet sea anemone).